A 51-amino-acid chain; its full sequence is Sperm protamine P1 (51 aa).

Belongs to the protamine P1 family. As to quaternary structure, cross-linked by interchain disulfide bonds around the DNA-helix. As to expression, testis.

It is found in the nucleus. It localises to the chromosome. Protamines substitute for histones in the chromatin of sperm during the haploid phase of spermatogenesis. They compact sperm DNA into a highly condensed, stable and inactive complex. The chain is Sperm protamine P1 (PRM1) from Hylobates lar (Lar gibbon).